The following is a 104-amino-acid chain: L-rhamnose mutarotase (104 aa).

Residue Y18 coordinates substrate. The active-site Proton donor is H22. Residues Y41 and 76 to 77 (WW) each bind substrate.

The protein belongs to the rhamnose mutarotase family. In terms of assembly, homodimer.

Its subcellular location is the cytoplasm. It catalyses the reaction alpha-L-rhamnose = beta-L-rhamnose. The protein operates within carbohydrate metabolism; L-rhamnose metabolism. In terms of biological role, involved in the anomeric conversion of L-rhamnose. The sequence is that of L-rhamnose mutarotase from Opitutus terrae (strain DSM 11246 / JCM 15787 / PB90-1).